The following is a 487-amino-acid chain: 3-octaprenyl-4-hydroxybenzoate carboxy-lyase (487 aa).

Asparagine 172 is a binding site for Mn(2+). Prenylated FMN contacts are provided by residues 175 to 177 (IYR), 189 to 191 (RWL), and 194 to 195 (RG). Position 238 (glutamate 238) interacts with Mn(2+). Aspartate 287 acts as the Proton donor in catalysis.

It belongs to the UbiD family. Homohexamer. Prenylated FMN is required as a cofactor. It depends on Mn(2+) as a cofactor.

The protein resides in the cell membrane. It catalyses the reaction a 4-hydroxy-3-(all-trans-polyprenyl)benzoate + H(+) = a 2-(all-trans-polyprenyl)phenol + CO2. It functions in the pathway cofactor biosynthesis; ubiquinone biosynthesis. Functionally, catalyzes the decarboxylation of 3-octaprenyl-4-hydroxy benzoate to 2-octaprenylphenol, an intermediate step in ubiquinone biosynthesis. The protein is 3-octaprenyl-4-hydroxybenzoate carboxy-lyase of Actinobacillus pleuropneumoniae serotype 5b (strain L20).